Reading from the N-terminus, the 426-residue chain is Serine--tRNA ligase (426 aa).

Position 230–232 (threonine 230–glutamate 232) interacts with L-serine. Arginine 261–glutamate 263 is a binding site for ATP. Glutamate 284 provides a ligand contact to L-serine. An ATP-binding site is contributed by glutamate 348–serine 351. Residue serine 384 coordinates L-serine.

It belongs to the class-II aminoacyl-tRNA synthetase family. Type-1 seryl-tRNA synthetase subfamily. In terms of assembly, homodimer. The tRNA molecule binds across the dimer.

It localises to the cytoplasm. The catalysed reaction is tRNA(Ser) + L-serine + ATP = L-seryl-tRNA(Ser) + AMP + diphosphate + H(+). It catalyses the reaction tRNA(Sec) + L-serine + ATP = L-seryl-tRNA(Sec) + AMP + diphosphate + H(+). It functions in the pathway aminoacyl-tRNA biosynthesis; selenocysteinyl-tRNA(Sec) biosynthesis; L-seryl-tRNA(Sec) from L-serine and tRNA(Sec): step 1/1. Catalyzes the attachment of serine to tRNA(Ser). Is also able to aminoacylate tRNA(Sec) with serine, to form the misacylated tRNA L-seryl-tRNA(Sec), which will be further converted into selenocysteinyl-tRNA(Sec). The sequence is that of Serine--tRNA ligase from Erythrobacter litoralis (strain HTCC2594).